Here is a 328-residue protein sequence, read N- to C-terminus: Zinc finger Ran-binding domain-containing protein 2 (328 aa).

Serine 9 carries the post-translational modification Phosphoserine. The segment at 9 to 40 (SDGDWICPDKKCGNVNFARRTSCNRCGREKTT) adopts a RanBP2-type 1 zinc-finger fold. 3 positions are modified to N6-acetyllysine: lysine 18, lysine 54, and lysine 92. The RanBP2-type 2 zinc finger occupies 65-94 (SANDWQCKTCSNVNWARRSECNMCNTPKYA). Residues 117-328 (REESDGEYDE…SGSRSSSKKK (212 aa)) form a disordered region. Serine 120, serine 153, serine 181, serine 188, and serine 193 each carry phosphoserine. Residues 150-163 (DKESEGEEEDEDED) are compositionally biased toward acidic residues. A required for nuclear targeting region spans residues 151–328 (KESEGEEEDE…SGSRSSSKKK (178 aa)). The span at 196-210 (KKSNRRSRSKSRSSH) shows a compositional bias: basic residues. Composition is skewed to low complexity over residues 211-224 (SRSS…SSSR) and 232-242 (RSSSSSQSRSR). Composition is skewed to basic residues over residues 251–271 (SRGS…RKRS) and 297–312 (KKRR…HHRS). Residues 313–328 (SSGSSHSGSRSSSKKK) are compositionally biased toward low complexity.

It belongs to the ZRANB2 family. Interacts with the C-terminal half of SNRNP70, the Arg/Ser-rich domain of AKAP17A as well as with U2AF1 and CLK1.

It is found in the nucleus. In terms of biological role, splice factor required for alternative splicing of TRA2B/SFRS10 transcripts. Binds to ssRNA containing the consensus sequence 5'-AGGUAA-3'. May interfere with constitutive 5'-splice site selection. In Sus scrofa (Pig), this protein is Zinc finger Ran-binding domain-containing protein 2 (ZRANB2).